Consider the following 546-residue polypeptide: CTP synthase (546 aa).

Positions 1–264 are amidoligase domain; that stretch reads MRYIVVTGGV…TKYIMKAMRL (264 aa). CTP is bound at residue serine 12. Serine 12 provides a ligand contact to UTP. ATP contacts are provided by residues 13–18 and aspartate 70; that span reads GLGKGI. Mg(2+)-binding residues include aspartate 70 and glutamate 140. CTP-binding positions include 147–149, 185–190, and lysine 221; these read DIE and KTKPTQ. Residues 185–190 and lysine 221 contribute to the UTP site; that span reads KTKPTQ. In terms of domain architecture, Glutamine amidotransferase type-1 spans 298-534; that stretch reads GSQCTDPMKD…VEAMKAQRLR (237 aa). Glycine 357 serves as a coordination point for L-glutamine. Cysteine 384 serves as the catalytic Nucleophile; for glutamine hydrolysis. Residues 385-388, glutamate 408, and arginine 464 each bind L-glutamine; that span reads FGMQ. Residues histidine 507 and glutamate 509 contribute to the active site.

The protein belongs to the CTP synthase family. In terms of assembly, homotetramer.

The enzyme catalyses UTP + L-glutamine + ATP + H2O = CTP + L-glutamate + ADP + phosphate + 2 H(+). The catalysed reaction is L-glutamine + H2O = L-glutamate + NH4(+). It catalyses the reaction UTP + NH4(+) + ATP = CTP + ADP + phosphate + 2 H(+). Its pathway is pyrimidine metabolism; CTP biosynthesis via de novo pathway; CTP from UDP: step 2/2. Allosterically activated by GTP, when glutamine is the substrate; GTP has no effect on the reaction when ammonia is the substrate. The allosteric effector GTP functions by stabilizing the protein conformation that binds the tetrahedral intermediate(s) formed during glutamine hydrolysis. Inhibited by the product CTP, via allosteric rather than competitive inhibition. In terms of biological role, catalyzes the ATP-dependent amination of UTP to CTP with either L-glutamine or ammonia as the source of nitrogen. Regulates intracellular CTP levels through interactions with the four ribonucleotide triphosphates. The protein is CTP synthase of Methanothrix thermoacetophila (strain DSM 6194 / JCM 14653 / NBRC 101360 / PT) (Methanosaeta thermophila).